The following is a 98-amino-acid chain: Acylphosphatase (98 aa).

Residues 12-98 (TYYVRVRGVV…ERRFERFQQQ (87 aa)) enclose the Acylphosphatase-like domain. Catalysis depends on residues R27 and N45.

The protein belongs to the acylphosphatase family.

The enzyme catalyses an acyl phosphate + H2O = a carboxylate + phosphate + H(+). The sequence is that of Acylphosphatase (acyP) from Burkholderia lata (strain ATCC 17760 / DSM 23089 / LMG 22485 / NCIMB 9086 / R18194 / 383).